We begin with the raw amino-acid sequence, 99 residues long: MAPGLVVGLNKGKVLTKRQLPERPSRRKGQLSKRTSFVRSIVREVAGFAPYERRVMELIRNSQDKRARKLAKKRLGTLKRAKGKIEELTSVIQSSRLAH.

Belongs to the eukaryotic ribosomal protein eL36 family. As to quaternary structure, component of the large ribosomal subunit (LSU). Mature yeast ribosomes consist of a small (40S) and a large (60S) subunit. The 40S small subunit contains 1 molecule of ribosomal RNA (18S rRNA) and at least 33 different proteins. The large 60S subunit contains 3 rRNA molecules (25S, 5.8S and 5S rRNA) and at least 46 different proteins.

It localises to the cytoplasm. In terms of biological role, component of the ribosome, a large ribonucleoprotein complex responsible for the synthesis of proteins in the cell. The small ribosomal subunit (SSU) binds messenger RNAs (mRNAs) and translates the encoded message by selecting cognate aminoacyl-transfer RNA (tRNA) molecules. The large subunit (LSU) contains the ribosomal catalytic site termed the peptidyl transferase center (PTC), which catalyzes the formation of peptide bonds, thereby polymerizing the amino acids delivered by tRNAs into a polypeptide chain. The nascent polypeptides leave the ribosome through a tunnel in the LSU and interact with protein factors that function in enzymatic processing, targeting, and the membrane insertion of nascent chains at the exit of the ribosomal tunnel. In Schizosaccharomyces pombe (strain 972 / ATCC 24843) (Fission yeast), this protein is Large ribosomal subunit protein eL36A (rpl3601).